The following is a 341-amino-acid chain: Zinc transporter 6, chloroplastic (341 aa).

The helical transmembrane segment at 28 to 48 (IVAVFAIFLTSVFGVWGPVLL) threads the bilayer. At 49–61 (AKYFHGKPLYDKA) the chain is on the cytoplasmic side. Residues 62–82 (ILVIKCFAAGVILSTSLVHVL) form a helical membrane-spanning segment. At 83–102 (PEAFESLADCQVSSRHPWKD) the chain is on the lumenal side. The helical transmembrane segment at 103 to 123 (FPFAGLVTMIGAITALLVDLT) threads the bilayer. Topologically, residues 124 to 179 (ASEHMGHGGGGGGDGGMEYMPVGKAVGGLEMKEGKCGADLEIQENSEEEIVKMKQR) are cytoplasmic. The chain crosses the membrane as a helical span at residues 180–200 (LVSQVLEIGIIFHSVIIGVTM). Residues 201-211 (GMSQNKCTIRP) lie on the Lumenal side of the membrane. A helical transmembrane segment spans residues 212–232 (LIAALSFHQIFEGLGLGGCIA). Topologically, residues 233 to 243 (QAGFKAGTVVY) are cytoplasmic. The chain crosses the membrane as a helical span at residues 244–264 (MCLMFAVTTPLGIVLGMVIFA). Topologically, residues 265 to 280 (ATGYDDQNPNALIMEG) are lumenal. The chain crosses the membrane as a helical span at residues 281–301 (LLGSFSSGILIYMALVDLIAL). Topologically, residues 302-320 (DFFHNKMLTTCGESGSRLK) are cytoplasmic. A helical membrane pass occupies residues 321–341 (KLCFVALVLGSASMSLLALWA).

This sequence belongs to the ZIP transporter (TC 2.A.5) family.

It localises to the plastid. Its subcellular location is the chloroplast thylakoid membrane. In terms of biological role, may play a role in the transport of zinc in the plastids. The polypeptide is Zinc transporter 6, chloroplastic (ZIP6) (Arabidopsis thaliana (Mouse-ear cress)).